A 154-amino-acid polypeptide reads, in one-letter code: Ribosome maturation factor RimP (154 aa).

The protein belongs to the RimP family.

Its subcellular location is the cytoplasm. In terms of biological role, required for maturation of 30S ribosomal subunits. This Ruthia magnifica subsp. Calyptogena magnifica protein is Ribosome maturation factor RimP.